A 794-amino-acid polypeptide reads, in one-letter code: Protein sel-1 homolog 1 (794 aa).

An N-terminal signal peptide occupies residues 1 to 21 (MQVRVRLLLLLCAVLLGSAAA). An interaction with ERLEC1, OS9 and SYVN1 region spans residues 22-737 (SSDEETNQDE…DLFTQLDMDQ (716 aa)). The Lumenal portion of the chain corresponds to 22 to 738 (SSDEETNQDE…LFTQLDMDQL (717 aa)). A compositionally biased stretch (acidic residues) spans 23–32 (SDEETNQDES). Disordered regions lie at residues 23 to 46 (SDEE…GSVK) and 73 to 105 (QDEE…KTYE). Residues 122-170 (AHGEPCHFPFLFLDKEYDECTSDGREDGRLWCATTYDYKTDEKWGFCET) form the Fibronectin type-II domain. Intrachain disulfides connect C127–C153 and C141–C168. 9 Sel1-like repeats span residues 183 to 218 (AEAI…GMNH), 219 to 254 (TKAL…EEGS), 255 to 290 (PKGQ…LGGN), 291 to 326 (LIAH…NHVA), 373 to 409 (VQAQ…NAGN), 410 to 446 (SHAM…DMGN), 447 to 482 (PVGQ…EQGW), 483 to 518 (VDGQ…QGGH), and 519 to 554 (ILAF…ERGR). N-linked (GlcNAc...) asparagine glycans are attached at residues N195 and N217. The N-linked (GlcNAc...) asparagine glycan is linked to N272. The interval 352–537 (NSGMLEEDLI…MHASGTGVMR (186 aa)) is important for homodimerization and oligomerization. N431 carries N-linked (GlcNAc...) asparagine glycosylation. N-linked (GlcNAc...) asparagine glycosylation is present at N608. 2 Sel1-like repeats span residues 627-662 (TVAR…EQQH) and 664-699 (AQAM…EASP). The tract at residues 643–723 (TDVDYETAFI…VVYFLQYIRE (81 aa)) is interaction with SYVN1. Residues 738–794 (LLGPEWDLYLMTIIALLLGTVIAYRQRQHQDIPVPRPPGPRPAPPQQEGPPEQQPPQ) are mediates retention in the endoplasmic reticulum. A helical membrane pass occupies residues 739 to 759 (LGPEWDLYLMTIIALLLGTVI). The Cytoplasmic portion of the chain corresponds to 760-794 (AYRQRQHQDIPVPRPPGPRPAPPQQEGPPEQQPPQ). A disordered region spans residues 767-794 (QDIPVPRPPGPRPAPPQQEGPPEQQPPQ). The segment covering 771–794 (VPRPPGPRPAPPQQEGPPEQQPPQ) has biased composition (pro residues).

Belongs to the sel-1 family. In terms of assembly, homodimer and homooligomer. May form a complex with ERLEC1, HSPA5, OS9, and SYVN1. Interacts with FOXRED2 and EDEM1. Interacts with LPL and LMF1; may stabilize the complex formed by LPL and LMF1 and thereby promote the export of LPL dimers. Component of the HRD1 complex, which comprises at least SYNV1/HRD1, DERL1/2, FAM8A1, HERPUD1/HERP, OS9, SEL1L and UBE2J1. SYNV1 assembles with SEL1L and FAM8A1 through its transmembrane domains, but interaction with its cytoplasmic domain is required to confer stability to FAM8A1 and enhance recruitment of HERPUD1. The interaction with SYNV1/HRD1 is direct. In terms of processing, N-glycosylated.

It is found in the endoplasmic reticulum membrane. Functionally, plays a role in the endoplasmic reticulum quality control (ERQC) system also called ER-associated degradation (ERAD) involved in ubiquitin-dependent degradation of misfolded endoplasmic reticulum proteins. Enhances SYVN1 stability. Plays a role in LPL maturation and secretion. Required for normal differentiation of the pancreas epithelium, and for normal exocrine function and survival of pancreatic cells. May play a role in Notch signaling. The chain is Protein sel-1 homolog 1 (Sel1l) from Rattus norvegicus (Rat).